Consider the following 296-residue polypeptide: GTP cyclohydrolase FolE2 (296 aa).

The protein belongs to the GTP cyclohydrolase IV family.

It catalyses the reaction GTP + H2O = 7,8-dihydroneopterin 3'-triphosphate + formate + H(+). It participates in cofactor biosynthesis; 7,8-dihydroneopterin triphosphate biosynthesis; 7,8-dihydroneopterin triphosphate from GTP: step 1/1. Its function is as follows. Converts GTP to 7,8-dihydroneopterin triphosphate. The protein is GTP cyclohydrolase FolE2 of Ectopseudomonas mendocina (strain ymp) (Pseudomonas mendocina).